A 611-amino-acid polypeptide reads, in one-letter code: Pseudomonine synthase PmsE (611 aa).

Residues 533 to 608 (VSVENTRTWL…SWWALVEARQ (76 aa)) enclose the Carrier domain. Ser-569 carries the post-translational modification O-(pantetheine 4'-phosphoryl)serine.

It belongs to the ATP-dependent AMP-binding enzyme family. Pantetheine 4'-phosphate is required as a cofactor.

The catalysed reaction is salicylate + holo-[ACP] + ATP = salicyl-[ACP] + AMP + diphosphate. It functions in the pathway siderophore biosynthesis; pseudomonine biosynthesis. Involved in the biosynthesis of the siderophore pseudomonine. Specifically adenylates salicylate and loads it onto its peptidyl carrier domain, via a thioester linkage to the phosphopanthetheine moiety. The sequence is that of Pseudomonine synthase PmsE from Pseudomonas entomophila (strain L48).